Reading from the N-terminus, the 326-residue chain is Vitamin B12 import system permease protein BtuC (326 aa).

The next 9 helical transmembrane spans lie at L17 to A39, R59 to F81, P88 to L107, Q111 to L133, L146 to T168, W188 to C205, M242 to L264, V274 to L296, and L303 to L322.

This sequence belongs to the binding-protein-dependent transport system permease family. FecCD subfamily. As to quaternary structure, the complex is composed of two ATP-binding proteins (BtuD), two transmembrane proteins (BtuC) and a solute-binding protein (BtuF).

It localises to the cell inner membrane. Functionally, part of the ABC transporter complex BtuCDF involved in vitamin B12 import. Involved in the translocation of the substrate across the membrane. This Salmonella paratyphi A (strain ATCC 9150 / SARB42) protein is Vitamin B12 import system permease protein BtuC.